A 514-amino-acid polypeptide reads, in one-letter code: Glutamate--cysteine ligase (514 aa).

This sequence belongs to the glutamate--cysteine ligase type 1 family. Type 1 subfamily.

It carries out the reaction L-cysteine + L-glutamate + ATP = gamma-L-glutamyl-L-cysteine + ADP + phosphate + H(+). The protein operates within sulfur metabolism; glutathione biosynthesis; glutathione from L-cysteine and L-glutamate: step 1/2. This Enterobacter sp. (strain 638) protein is Glutamate--cysteine ligase.